The sequence spans 1271 residues: ATP-dependent helicase/nuclease subunit A (1271 aa).

Residues 3 to 476 (TKWTEEQELA…IMLYKNFRSR (474 aa)) enclose the UvrD-like helicase ATP-binding domain. An ATP-binding site is contributed by 24–31 (AAAGSGKT). Residues 528–824 (IENLKVAGDI…RIMSIHKSKG (297 aa)) enclose the UvrD-like helicase C-terminal domain.

Belongs to the helicase family. AddA subfamily. As to quaternary structure, heterodimer of AddA and AddB/RexB. Requires Mg(2+) as cofactor.

The enzyme catalyses Couples ATP hydrolysis with the unwinding of duplex DNA by translocating in the 3'-5' direction.. The catalysed reaction is ATP + H2O = ADP + phosphate + H(+). Its function is as follows. The heterodimer acts as both an ATP-dependent DNA helicase and an ATP-dependent, dual-direction single-stranded exonuclease. Recognizes the chi site generating a DNA molecule suitable for the initiation of homologous recombination. The AddA nuclease domain is required for chi fragment generation; this subunit has the helicase and 3' -&gt; 5' nuclease activities. The protein is ATP-dependent helicase/nuclease subunit A of Clostridium perfringens (strain ATCC 13124 / DSM 756 / JCM 1290 / NCIMB 6125 / NCTC 8237 / Type A).